We begin with the raw amino-acid sequence, 364 residues long: tRNA-specific 2-thiouridylase MnmA 1 (364 aa).

ATP is bound by residues 10–17 and Met36; that span reads GMSGGVDS. The active-site Nucleophile is the Cys106. An intrachain disulfide couples Cys106 to Cys204. Residue Gly130 coordinates ATP. The segment at 154-156 is interaction with tRNA; the sequence is KDQ. Cys204 serves as the catalytic Cysteine persulfide intermediate. Residues 310 to 311 form an interaction with tRNA region; the sequence is RY.

The protein belongs to the MnmA/TRMU family.

The protein localises to the cytoplasm. The catalysed reaction is S-sulfanyl-L-cysteinyl-[protein] + uridine(34) in tRNA + AH2 + ATP = 2-thiouridine(34) in tRNA + L-cysteinyl-[protein] + A + AMP + diphosphate + H(+). Functionally, catalyzes the 2-thiolation of uridine at the wobble position (U34) of tRNA, leading to the formation of s(2)U34. This is tRNA-specific 2-thiouridylase MnmA 1 from Thermoanaerobacter sp. (strain X514).